A 188-amino-acid polypeptide reads, in one-letter code: Small ribosomal subunit protein bS18c (188 aa).

Low complexity predominate over residues 1-19 (MNNQSFNNFSQVNSNSSFF). Residues 1–79 (MNNQSFNNFS…TSNKRKVLSV (79 aa)) form a disordered region. Residues 25–71 (NLQNTNLEMTNGTNPPSSFSKQTPQKRQSFGTNTNFSKGNSSRGSTS) are compositionally biased toward polar residues.

It belongs to the bacterial ribosomal protein bS18 family. Part of the 30S ribosomal subunit.

Its subcellular location is the plastid. The protein localises to the chloroplast. This Tetradesmus obliquus (Green alga) protein is Small ribosomal subunit protein bS18c.